We begin with the raw amino-acid sequence, 193 residues long: CD70 antigen (193 aa).

At 1 to 17 (MPEEGSGCSVRRRPYGC) the chain is on the cytoplasmic side. Residues 18 to 38 (VLRAALVPLVAGLVICLVVCI) traverse the membrane as a helical; Signal-anchor for type II membrane protein segment. The Extracellular segment spans residues 39–193 (QRFAQAQQQL…TFFGVQWVRP (155 aa)). The THD domain occupies 56–191 (DVAELQLNHT…DETFFGVQWV (136 aa)). The N-linked (GlcNAc...) asparagine glycan is linked to Asn63. 2 disulfides stabilise this stretch: Cys115–Cys151 and Cys133–Cys168. An N-linked (GlcNAc...) asparagine glycan is attached at Asn170.

Belongs to the tumor necrosis factor family. As to quaternary structure, homotrimer. In terms of processing, N-glycosylated.

It is found in the cell membrane. Expressed at the plasma membrane of B cells, it is the ligand of the CD27 receptor which is specifically expressed at the surface of T cells. The CD70-CD27 signaling pathway mediates antigen-specific T cell activation and expansion which in turn provides immune surveillance of B cells. In Homo sapiens (Human), this protein is CD70 antigen.